A 509-amino-acid polypeptide reads, in one-letter code: Maturase K (509 aa).

The protein belongs to the intron maturase 2 family. MatK subfamily.

Its subcellular location is the plastid. It is found in the chloroplast. Usually encoded in the trnK tRNA gene intron. Probably assists in splicing its own and other chloroplast group II introns. This Arpophyllum giganteum (Hyacinth orchid) protein is Maturase K.